We begin with the raw amino-acid sequence, 158 residues long: Large ribosomal subunit protein uL30 (158 aa).

It belongs to the universal ribosomal protein uL30 family. Part of the 50S ribosomal subunit.

This chain is Large ribosomal subunit protein uL30, found in Saccharolobus solfataricus (strain ATCC 35092 / DSM 1617 / JCM 11322 / P2) (Sulfolobus solfataricus).